The following is a 190-amino-acid chain: MDRTEQKSIIEGLLFVSGDEGISPEQIAKVLEIEGNEVIDILEEMQKECEGAHRGLQIVQYAKVYRFATKKEHASYYQKLIDIPTAASLSQAALETLAIVAYRQPITRTEMEEIRGVKTDKALQTLVSHLLIKEMGRAEGPGRPILYGTTKEFLDTFGLKTLDDLPPLSEENEQMNEADLFFGSLQEISK.

The protein belongs to the ScpB family. As to quaternary structure, homodimer. Homodimerization may be required to stabilize the binding of ScpA to the Smc head domains. Component of a cohesin-like complex composed of ScpA, ScpB and the Smc homodimer, in which ScpA and ScpB bind to the head domain of Smc. The presence of the three proteins is required for the association of the complex with DNA.

Its subcellular location is the cytoplasm. Participates in chromosomal partition during cell division. May act via the formation of a condensin-like complex containing Smc and ScpA that pull DNA away from mid-cell into both cell halves. The chain is Segregation and condensation protein B from Bacillus cereus (strain ATCC 10987 / NRS 248).